We begin with the raw amino-acid sequence, 224 residues long: PKHD-type hydroxylase tll1907 (224 aa).

Positions 77–176 (KIIGPLLFSR…RLVAVAWVQS (100 aa)) constitute a Fe2OG dioxygenase domain. 3 residues coordinate Fe cation: histidine 96, aspartate 98, and histidine 157. Residue arginine 167 participates in 2-oxoglutarate binding.

Requires Fe(2+) as cofactor. It depends on L-ascorbate as a cofactor.

The chain is PKHD-type hydroxylase tll1907 from Thermosynechococcus vestitus (strain NIES-2133 / IAM M-273 / BP-1).